The following is a 461-amino-acid chain: MSVLLETSLGDIVIDLLVDESPKACENFLKLCKVKYYNFSPFYSVQKNFSFQTGDPIGPDSPDSNGGSSIWGLLEGPSKQAVPLALPPKLKHDEKGTVSMAAVPSPHDPDLRLVTSQFIVTLGDNLDYLDGKAVIFGKVVEGFDVLEKVNEAFIDDRGRPLKDIRIRHTVILDDPFDDPPGLVEPPESPLPTKAQLATVRIADDEDLGDDMDEASMEKLRREREARAQALTLEMVGDLPFAEVKPPENVLFVCKLNPVTQDEDLELIFSRFGKILSCEVIRDKRTGDSLQYAFIEFESQKDCEQAYFKMQGVLIDDHRIHVDFSQSVSKLSESWRDATVKKRSAQRGGFGGVAGLEKKRQYRASENARERANYNMVFDKNDNRRSAPRERSYSRSPQRNNYRDRRDSRSPRRDSYRSRYGDRSNSRSPPLRDRDRIRTDYYDNDRRRGYRDDDRYRDRRRR.

Residues 1–171 (MSVLLETSLG…KDIRIRHTVI (171 aa)) form the PPIase cyclophilin-type domain. Residues 248 to 326 (NVLFVCKLNP…HRIHVDFSQS (79 aa)) form the RRM domain. Residues 372–461 (NYNMVFDKND…DDRYRDRRRR (90 aa)) form a disordered region. Composition is skewed to basic and acidic residues over residues 378 to 392 (DKNDNRRSAPRERSY) and 400 to 461 (NYRD…RRRR).

It belongs to the cyclophilin-type PPIase family. PPIL4 subfamily.

It localises to the nucleus. It catalyses the reaction [protein]-peptidylproline (omega=180) = [protein]-peptidylproline (omega=0). In terms of biological role, PPIases accelerate the folding of proteins. It catalyzes the cis-trans isomerization of proline imidic peptide bonds in oligopeptides. The polypeptide is Peptidyl-prolyl cis-trans isomerase-like 4 (cyp6) (Emericella nidulans (strain FGSC A4 / ATCC 38163 / CBS 112.46 / NRRL 194 / M139) (Aspergillus nidulans)).